The chain runs to 836 residues: Probable serine/threonine-protein kinase dyrk1 (836 aa).

The span at 99–278 (QQQYQQQHNN…SSNNNNNNKQ (180 aa)) shows a compositional bias: low complexity. The interval 99–286 (QQQYQQQHNN…KQSKYNDGYD (188 aa)) is disordered. Residues 304–624 (FEIISSLGKG…PLEALQHSFF (321 aa)) form the Protein kinase domain. Residues 310–318 (LGKGSFGQV) and lysine 333 contribute to the ATP site. Aspartate 432 serves as the catalytic Proton acceptor. Disordered regions lie at residues 627–697 (DETS…QQQQ), 718–767 (TYSP…INSN), and 785–836 (NIYN…NNNI). Residues 630–697 (SQPPQQQSQQ…QQLQQQQQQQ (68 aa)) show a composition bias toward low complexity. A compositionally biased stretch (polar residues) spans 718–728 (TYSPTTQQSNH). Over residues 729-744 (KLVDQMKKASMKDKSP) the composition is skewed to basic and acidic residues. A compositionally biased stretch (low complexity) spans 785 to 816 (NIYNNNNNNNNNNNNNNNNNNSNNYNNSNELS).

Belongs to the protein kinase superfamily. CMGC Ser/Thr protein kinase family. MNB/DYRK subfamily.

The enzyme catalyses L-seryl-[protein] + ATP = O-phospho-L-seryl-[protein] + ADP + H(+). The catalysed reaction is L-threonyl-[protein] + ATP = O-phospho-L-threonyl-[protein] + ADP + H(+). It carries out the reaction L-tyrosyl-[protein] + ATP = O-phospho-L-tyrosyl-[protein] + ADP + H(+). The sequence is that of Probable serine/threonine-protein kinase dyrk1 (dyrk1) from Dictyostelium discoideum (Social amoeba).